Consider the following 37-residue polypeptide: Large ribosomal subunit protein bL36 (37 aa).

The protein belongs to the bacterial ribosomal protein bL36 family.

This Colwellia psychrerythraea (strain 34H / ATCC BAA-681) (Vibrio psychroerythus) protein is Large ribosomal subunit protein bL36.